A 594-amino-acid polypeptide reads, in one-letter code: MATATEIRKDLRTPIVCVMGHVDHGKTSLLDRIRGTAVVDKEAGAITQHIGATEVPLQTIQTLCKGMIGGNIVVPGLLFIDTPGHHAFTNLRSRGGALADLAVLVVDINEGFQPQTVEAIKILKQFKTPFVIAANKIDRIHGWTAKNNSPFLQTFNSQPDHVKGIIETKTYELVGRMSDLGFSSDRYDRIRDFTRNIGIIPISARTGEGIPDLLMILIGLAQRFLEESLKFQVTGPGVGTILEVKEERGLGYTIDTIIYDGEIRVGDTIVIGGREKPYSTKVRALLKPKPNREIRVEERFDRVNKVTAASGVKILAPELEKAMAGSQVRVTKESNVEDIIKEIEQEMEQAKIVTDEVGVMVKADTLGSLEAIVNELREAKIPIGRADVGDISKRDIINAETVNDPMYRVMLGFNVTILPDANDYLQTTDIKIFNSDVIYHLIDDFRKWETEQRALAEKKKFAEIVRPGKVKYLPNCTFRQSKPAVIGLQIMGGMLKPGVTLIKPDGSKIGVVRQIQERNENISIATVGKEVAVSIDGPTAGRQINEGEIYFVDVPEGHSKVLEFQLKDTIKQDELETLMEFLAIKRKDNPFWGR.

The 216-residue stretch at 11-226 folds into the tr-type G domain; it reads LRTPIVCVMG…LIGLAQRFLE (216 aa). Residues 20 to 27 form a G1 region; the sequence is GHVDHGKT. 20–27 is a binding site for GTP; sequence GHVDHGKT. The G2 stretch occupies residues 45–49; sequence AITQH. A G3 region spans residues 81 to 84; that stretch reads DTPG. GTP contacts are provided by residues 81–85 and 135–138; these read DTPGH and NKID. A G4 region spans residues 135–138; the sequence is NKID. The G5 stretch occupies residues 203 to 205; the sequence is SAR.

The protein belongs to the TRAFAC class translation factor GTPase superfamily. Classic translation factor GTPase family. IF-2 subfamily.

Its function is as follows. Function in general translation initiation by promoting the binding of the formylmethionine-tRNA to ribosomes. Seems to function along with eIF-2. The protein is Probable translation initiation factor IF-2 of Methanocella arvoryzae (strain DSM 22066 / NBRC 105507 / MRE50).